Here is a 150-residue protein sequence, read N- to C-terminus: Deoxyuridine 5'-triphosphate nucleotidohydrolase (150 aa).

Substrate contacts are provided by residues 69 to 71 (RSG), asparagine 82, 86 to 88 (LID), and lysine 96.

This sequence belongs to the dUTPase family. It depends on Mg(2+) as a cofactor.

It carries out the reaction dUTP + H2O = dUMP + diphosphate + H(+). The protein operates within pyrimidine metabolism; dUMP biosynthesis; dUMP from dCTP (dUTP route): step 2/2. In terms of biological role, this enzyme is involved in nucleotide metabolism: it produces dUMP, the immediate precursor of thymidine nucleotides and it decreases the intracellular concentration of dUTP so that uracil cannot be incorporated into DNA. The chain is Deoxyuridine 5'-triphosphate nucleotidohydrolase from Neisseria meningitidis serogroup B (strain ATCC BAA-335 / MC58).